The primary structure comprises 825 residues: MKKNNVNEQRRDFLKKTSLGVAGSALSGGMVGVVSKSAVAKEAEMKTVVTAAHWGSIGVVVQDGKVVKSGPAIEPAVPNELQTVVADQLYSERRVKCPMVRKGFLANPGKSDTTMRGRDEWVRVSWDEALDLVHNQLKRVRDEHGSTGIFAGSYGWFSCGSLHASRTLLQRYMNATGGFVGHKGDYSTGAAQVIMPHVLGTIEVYEQQTSWESILESSDIIVLWSANPLTTMRIAWMSTDQKGIEYFKKFQASGKRIICIDPQKSETCQMLNAEWIPVNTATDVPLMLGIAHTLVEQGKHDKDFLKKYTSGYAKFEEYLLGKTDGQPKTAEWAAKICGVPAETIKQLAADFASKRTMLMGGWGMQRQRHGEQTHWMLVTLASMLGQIGLPGGGFGLSYHYSNGGVPTATGGIIGSITASPSGKAGAKTWLDDTSKSAFPLARIADVLLHPGKKIQYNGTEITYPDIKAVYWAGGNPFVHHQDTNTLVKAFQKPDVVIVNEVNWTPTARMADIVLPATTSYERNDLTMAGDYSMMSVYPMKQVVPPQFEAKNDYDIFVELAKRAGVEEQYTEGKTEMEWLEEFYNAAFSAARANRVAMPRFDKFWAENKPLSFEAGEAAKKWVRYGEFREDPLLNPLGTPSGKIEIFSDVVEKMNYNDCKGHPSWMEPEEFAGNVTEEYPLALVTPHPYYRLHSQLAHTSLRQKYAVNDREPVMIHPEDAAARGIKDGDIVRIHSKRGQVLAGAAVTENIIKGTVALHEGAWYDPMYLGESEKPLCKNGCANVLTRDEGTSKLAQGNSPNTCIVQIEKFIGVAPEVTVFKQPKQVA.

Residues 1 to 40 constitute a signal peptide (tat-type signal); that stretch reads MKKNNVNEQRRDFLKKTSLGVAGSALSGGMVGVVSKSAVA. A Mo-bis(molybdopterin guanine dinucleotide)-binding site is contributed by serine 187.

It belongs to the prokaryotic molybdopterin-containing oxidoreductase family. Mo-bis(molybdopterin guanine dinucleotide) is required as a cofactor. Predicted to be exported by the Tat system. The position of the signal peptide cleavage has not been experimentally proven.

It localises to the periplasm. The catalysed reaction is trimethylamine + 2 Fe(III)-[cytochrome c] + H2O = trimethylamine N-oxide + 2 Fe(II)-[cytochrome c] + 3 H(+). Its function is as follows. Reduces trimethylamine-N-oxide (TMAO) into trimethylamine; an anaerobic reaction coupled to energy-yielding reactions. The protein is Trimethylamine-N-oxide reductase (torZ) of Haemophilus influenzae (strain ATCC 51907 / DSM 11121 / KW20 / Rd).